The primary structure comprises 310 residues: Antiviral protein II/III (310 aa).

The N-terminal stretch at 1-25 (MKMKVLEVVGLAISIWLMLTPPASS) is a signal peptide. 2 disulfides stabilise this stretch: Cys-57/Cys-284 and Cys-106/Cys-123. Tyr-94 is an active-site residue. Catalysis depends on residues Tyr-142, Glu-197, and Arg-200.

This sequence belongs to the ribosome-inactivating protein family. Type 1 RIP subfamily. PAP-II is expressed in early summer leaves (at protein level). PAP-III is expressed in late summer leaves (at protein level).

It catalyses the reaction Endohydrolysis of the N-glycosidic bond at one specific adenosine on the 28S rRNA.. In terms of biological role, possesses antiviral potency. Inhibits viral infection of plants (tobacco mosaic virus). Inhibits protein synthesis in both prokaryotes and eukaryotes. The polypeptide is Antiviral protein II/III (PAP2) (Phytolacca americana (American pokeweed)).